A 329-amino-acid chain; its full sequence is Biotin synthase (329 aa).

In terms of domain architecture, Radical SAM core spans 46–275 (FFGRRLKLVR…LNPKAELRAS (230 aa)). Positions 64, 68, and 71 each coordinate [4Fe-4S] cluster. Positions 108, 140, 200, and 273 each coordinate [2Fe-2S] cluster.

The protein belongs to the radical SAM superfamily. Biotin synthase family. As to quaternary structure, homodimer. It depends on [4Fe-4S] cluster as a cofactor. The cofactor is [2Fe-2S] cluster.

The catalysed reaction is (4R,5S)-dethiobiotin + (sulfur carrier)-SH + 2 reduced [2Fe-2S]-[ferredoxin] + 2 S-adenosyl-L-methionine = (sulfur carrier)-H + biotin + 2 5'-deoxyadenosine + 2 L-methionine + 2 oxidized [2Fe-2S]-[ferredoxin]. It participates in cofactor biosynthesis; biotin biosynthesis; biotin from 7,8-diaminononanoate: step 2/2. Catalyzes the conversion of dethiobiotin (DTB) to biotin by the insertion of a sulfur atom into dethiobiotin via a radical-based mechanism. The polypeptide is Biotin synthase (Thermus thermophilus (strain ATCC BAA-163 / DSM 7039 / HB27)).